Reading from the N-terminus, the 158-residue chain is Large ribosomal subunit protein uL22 (158 aa).

The protein belongs to the universal ribosomal protein uL22 family. As to quaternary structure, part of the 50S ribosomal subunit.

Functionally, this protein binds specifically to 23S rRNA. It makes multiple contacts with different domains of the 23S rRNA in the assembled 50S subunit and ribosome. The globular domain of the protein is located near the polypeptide exit tunnel on the outside of the subunit, while an extended beta-hairpin is found that lines the wall of the exit tunnel in the center of the 70S ribosome. The chain is Large ribosomal subunit protein uL22 from Haloquadratum walsbyi (strain DSM 16790 / HBSQ001).